The primary structure comprises 237 residues: Urease accessory protein UreF (237 aa).

It belongs to the UreF family. UreD, UreF and UreG form a complex that acts as a GTP-hydrolysis-dependent molecular chaperone, activating the urease apoprotein by helping to assemble the nickel containing metallocenter of UreC. The UreE protein probably delivers the nickel.

The protein resides in the cytoplasm. Its function is as follows. Required for maturation of urease via the functional incorporation of the urease nickel metallocenter. The chain is Urease accessory protein UreF from Rhodopseudomonas palustris (strain HaA2).